The chain runs to 414 residues: Glutamyl-tRNA reductase (414 aa).

Substrate is bound by residues 49–52 (TCNR), serine 108, 113–115 (EPQ), and glutamine 119. The Nucleophile role is filled by cysteine 50. Position 188–193 (188–193 (GAGQTG)) interacts with NADP(+).

Belongs to the glutamyl-tRNA reductase family. As to quaternary structure, homodimer.

The catalysed reaction is (S)-4-amino-5-oxopentanoate + tRNA(Glu) + NADP(+) = L-glutamyl-tRNA(Glu) + NADPH + H(+). Its pathway is porphyrin-containing compound metabolism; protoporphyrin-IX biosynthesis; 5-aminolevulinate from L-glutamyl-tRNA(Glu): step 1/2. In terms of biological role, catalyzes the NADPH-dependent reduction of glutamyl-tRNA(Glu) to glutamate 1-semialdehyde (GSA). The polypeptide is Glutamyl-tRNA reductase (Francisella tularensis subsp. tularensis (strain WY96-3418)).